A 234-amino-acid chain; its full sequence is MDYTPRLQPARLIKRYKRFLADVVTPEGETLTLHCANTGAMTGCATPGDTVWYSTSDNPKRKYPHSWELTETQQNHWICVNTLRANTLLYEALLENRVEELSGYSDVKTEVRYGTENSRVDLLLQAPDKIDCYIEVKSVTLLQHECGYFPDAVTLRGQKHLRELQQMVSNGKRAVLFFAVLHSGIQQVSPARHIDSRYAELFTEAQRAGVEILCYGSTLCPDGITLTHKLPLLG.

This sequence belongs to the SfsA family.

This Pectobacterium carotovorum subsp. carotovorum (strain PC1) protein is Sugar fermentation stimulation protein homolog.